Here is a 105-residue protein sequence, read N- to C-terminus: MNKKEKEIIKIILRAYDHHLIDQAAKKIIDIVSKTGVNIEGPIPLPTRKEVFTVLRSPFVNKDSREQFERRTHKRLIQIINPNKKTIESLMHISLPTAIDILLKK.

This sequence belongs to the universal ribosomal protein uS10 family. In terms of assembly, part of the 30S ribosomal subunit.

Involved in the binding of tRNA to the ribosomes. This Aster yellows witches'-broom phytoplasma (strain AYWB) protein is Small ribosomal subunit protein uS10.